We begin with the raw amino-acid sequence, 141 residues long: Large ribosomal subunit protein uL16 (141 aa).

The segment at 1–21 (MLMPKRVKYRKQQRGHNRGMA) is disordered.

This sequence belongs to the universal ribosomal protein uL16 family. As to quaternary structure, part of the 50S ribosomal subunit.

Functionally, binds 23S rRNA and is also seen to make contacts with the A and possibly P site tRNAs. In Roseiflexus sp. (strain RS-1), this protein is Large ribosomal subunit protein uL16.